The sequence spans 145 residues: MSIQDVKNYLPHRYPFLLIDRVLELEIGKSIVALKNVTFNEPQFTGHFPEQPIMPGVMIVEALAQATGILAFKSEAGKPIDGQIYMLVGIDKVRFKRMVEPGDQLRLEVEVITIKRGIWKFKCKATVDNQIITSAELMCTQRTAG.

The active site involves histidine 47.

It belongs to the thioester dehydratase family. FabZ subfamily.

It localises to the cytoplasm. The enzyme catalyses a (3R)-hydroxyacyl-[ACP] = a (2E)-enoyl-[ACP] + H2O. Involved in unsaturated fatty acids biosynthesis. Catalyzes the dehydration of short chain beta-hydroxyacyl-ACPs and long chain saturated and unsaturated beta-hydroxyacyl-ACPs. The protein is 3-hydroxyacyl-[acyl-carrier-protein] dehydratase FabZ of Ruthia magnifica subsp. Calyptogena magnifica.